The chain runs to 62 residues: Ferredoxin-1 (62 aa).

2 4Fe-4S ferredoxin-type domains span residues 2 to 28 (ALYI…SAGS) and 29 to 62 (EIYV…IVQG). 8 residues coordinate [4Fe-4S] cluster: Cys9, Cys12, Cys15, Cys19, Cys38, Cys41, Cys50, and Cys54.

The cofactor is [4Fe-4S] cluster.

In terms of biological role, ferredoxins are iron-sulfur proteins that transfer electrons in a wide variety of metabolic reactions. The sequence is that of Ferredoxin-1 from Chlorobaculum tepidum (strain ATCC 49652 / DSM 12025 / NBRC 103806 / TLS) (Chlorobium tepidum).